The primary structure comprises 596 residues: Clathrin heavy chain linker domain-containing protein 1 (596 aa).

A coiled-coil region spans residues 129 to 241 (QLEAKMRIIE…RDIAENLKKD (113 aa)).

The protein is Clathrin heavy chain linker domain-containing protein 1 (Clhc1) of Mus musculus (Mouse).